The primary structure comprises 215 residues: Oligoribonuclease (215 aa).

The 166-residue stretch at 5 to 170 folds into the Exonuclease domain; the sequence is LVWIDCEMTG…ADIHESIREL (166 aa). Tyrosine 127 is a catalytic residue.

The protein belongs to the oligoribonuclease family.

The protein localises to the cytoplasm. 3'-to-5' exoribonuclease specific for small oligoribonucleotides. This chain is Oligoribonuclease, found in Mycobacterium ulcerans (strain Agy99).